Reading from the N-terminus, the 88-residue chain is Chaplin-F (88 aa).

The signal sequence occupies residues 1–36; sequence MYNPKEHFSMSRIAKGLALTSVAAAAVAGTAGVAAA. Residues 47–87 form the Chaplin domain; that stretch reads SPGVLSGNVVQVPVHIPVNVCGNTIDVIGLLNPAFGNECEN. C67 and C85 are disulfide-bonded.

It belongs to the chaplin family. Short chaplin subfamily. In terms of assembly, homodimer; disulfide linked. About 20% of ChpF isolated from cell wall forms disulfide-bonded homodimers.

Its subcellular location is the cell surface. The protein localises to the secreted. It is found in the cell wall. It localises to the fimbrium. Its function is as follows. One of 8 partially redundant surface-active proteins required for efficient formation of aerial mycelium; the short chaplins assemble into a hydrophobic, amyloidal fibrillar surface layer that envelopes and protects aerial hyphae and spores, presumably anchored to the long chaplins. Chaplins have an overlapping function with the surface-active SapB peptide; chaplins are essential on minimal medium while on rich medium both chaplins and SapB are required for efficient aerial hyphae formation. Chaplins are also involved in cell attachment to a hydrophobic surface. Forms amyloid fibrils in vitro probably composed of stacked beta-sheets, at low extracellular concentrations individually restores the ability to form aerial hyphae to a chaplin-deficient strain. A small chaplin extract (ChpD, ChpE, ChpF, ChpG and ChpH) self-assembles into 2 different amyloids; small fibrils at the air-water interface form an amphipathic membrane that resembles spore-surface structures involved in aerial hyphae formation, and hydrophilic fibrils in solution that resemble the fibers that attach cells to a hydrophobic surface. At the air-water interface the hydrophilic surface is in contact with water (probably equivalent to the peptidoglycan layer), while the hydrophobic face is exposed to the air, making the surface of the aerial hyphae hydrophobic. A small chaplin extract applied to a chaplin-deficient strain restores aerial hyphae formation. The small chaplin extract forms an amyloid-like structure similar to that seen on the surface of cells without rodlets (rdlA-rdlB deletions), and is highly surface active, reducing surface tension from 72 to 26 mJ/m(2), which probably allows escape of hyphae from an aqueous environment into air. ChpF alone is less surface active at pH 3.0 than at pH 10.0, it reduces the surface tension of water from 72.8 mN/m to 50 mN/m at pH 3.0 or to 37 mN/m at pH 10.0. ChpF and ChpG are sufficient to restore the rodlet layer and hydrophobicity to a strain deleted for the other 6 chaplin genes. This is Chaplin-F from Streptomyces coelicolor (strain ATCC BAA-471 / A3(2) / M145).